A 204-amino-acid chain; its full sequence is dTTP/UTP pyrophosphatase (204 aa).

The Proton acceptor role is filled by aspartate 68.

The protein belongs to the Maf family. YhdE subfamily. A divalent metal cation is required as a cofactor.

The protein resides in the cytoplasm. It catalyses the reaction dTTP + H2O = dTMP + diphosphate + H(+). It carries out the reaction UTP + H2O = UMP + diphosphate + H(+). Nucleoside triphosphate pyrophosphatase that hydrolyzes dTTP and UTP. May have a dual role in cell division arrest and in preventing the incorporation of modified nucleotides into cellular nucleic acids. This chain is dTTP/UTP pyrophosphatase, found in Thermotoga petrophila (strain ATCC BAA-488 / DSM 13995 / JCM 10881 / RKU-1).